The sequence spans 155 residues: Ribosomal RNA large subunit methyltransferase H (155 aa).

Residues leucine 73, glycine 104, and 123 to 128 contribute to the S-adenosyl-L-methionine site; that span reads LSPLTL.

Belongs to the RNA methyltransferase RlmH family. In terms of assembly, homodimer.

The protein localises to the cytoplasm. The enzyme catalyses pseudouridine(1915) in 23S rRNA + S-adenosyl-L-methionine = N(3)-methylpseudouridine(1915) in 23S rRNA + S-adenosyl-L-homocysteine + H(+). In terms of biological role, specifically methylates the pseudouridine at position 1915 (m3Psi1915) in 23S rRNA. The polypeptide is Ribosomal RNA large subunit methyltransferase H (Pseudomonas putida (strain GB-1)).